Here is a 287-residue protein sequence, read N- to C-terminus: Formamidopyrimidine-DNA glycosylase (287 aa).

The active-site Schiff-base intermediate with DNA is P2. E3 acts as the Proton donor in catalysis. The active-site Proton donor; for beta-elimination activity is the K61. DNA contacts are provided by H95, R115, and R157. The FPG-type zinc finger occupies 243-277; sequence NVYGRADQPCRRCGEPVRREAFMNRSSFSCPRCQP. R267 acts as the Proton donor; for delta-elimination activity in catalysis.

It belongs to the FPG family. Monomer. Requires Zn(2+) as cofactor.

The enzyme catalyses Hydrolysis of DNA containing ring-opened 7-methylguanine residues, releasing 2,6-diamino-4-hydroxy-5-(N-methyl)formamidopyrimidine.. It catalyses the reaction 2'-deoxyribonucleotide-(2'-deoxyribose 5'-phosphate)-2'-deoxyribonucleotide-DNA = a 3'-end 2'-deoxyribonucleotide-(2,3-dehydro-2,3-deoxyribose 5'-phosphate)-DNA + a 5'-end 5'-phospho-2'-deoxyribonucleoside-DNA + H(+). Functionally, involved in base excision repair of DNA damaged by oxidation or by mutagenic agents. Acts as a DNA glycosylase that recognizes and removes damaged bases. Has a preference for oxidized purines, such as 7,8-dihydro-8-oxoguanine (8-oxoG). Has AP (apurinic/apyrimidinic) lyase activity and introduces nicks in the DNA strand. Cleaves the DNA backbone by beta-delta elimination to generate a single-strand break at the site of the removed base with both 3'- and 5'-phosphates. The protein is Formamidopyrimidine-DNA glycosylase of Salinispora tropica (strain ATCC BAA-916 / DSM 44818 / JCM 13857 / NBRC 105044 / CNB-440).